The primary structure comprises 425 residues: Protein UL117 (425 aa).

The tract at residues 59-83 (PTTTSSSLAPPRDDERRPTPPLRPP) is disordered.

Belongs to the herpesviridae U84 family.

The protein localises to the host nucleus. In terms of biological role, plays a role in the inhibition of host DNA replication in the infected cell. Targets the mini-chromosome maintenance (MCM) complex and blocks the accumulation of MCM proteins and their loading onto host chromatin. In Homo sapiens (Human), this protein is Protein UL117 (UL117).